The sequence spans 185 residues: Ribosome-recycling factor (185 aa).

The protein belongs to the RRF family.

The protein resides in the cytoplasm. Responsible for the release of ribosomes from messenger RNA at the termination of protein biosynthesis. May increase the efficiency of translation by recycling ribosomes from one round of translation to another. This is Ribosome-recycling factor from Listeria innocua serovar 6a (strain ATCC BAA-680 / CLIP 11262).